Consider the following 505-residue polypeptide: ATP synthase subunit alpha (505 aa).

ATP is bound at residue 172–179; the sequence is GDRQIGKT.

The protein belongs to the ATPase alpha/beta chains family. As to quaternary structure, F-type ATPases have 2 components, CF(1) - the catalytic core - and CF(0) - the membrane proton channel. CF(1) has five subunits: alpha(3), beta(3), gamma(1), delta(1), epsilon(1). CF(0) has three main subunits: a(1), b(2) and c(9-12). The alpha and beta chains form an alternating ring which encloses part of the gamma chain. CF(1) is attached to CF(0) by a central stalk formed by the gamma and epsilon chains, while a peripheral stalk is formed by the delta and b chains.

The protein resides in the cell inner membrane. It carries out the reaction ATP + H2O + 4 H(+)(in) = ADP + phosphate + 5 H(+)(out). Its function is as follows. Produces ATP from ADP in the presence of a proton gradient across the membrane. The alpha chain is a regulatory subunit. This is ATP synthase subunit alpha from Syntrophobacter fumaroxidans (strain DSM 10017 / MPOB).